The primary structure comprises 107 residues: MSSKVAINSDIGQALWAVEQLQMEAGIDQVKVRVGASAGGGKRWEHMGQGTGACLGLVWLNQLVCRCPKMAADLLKFCTEQAKNDPFLVGIPAATNSFKEKKPYAIL.

Residues 69–107 (KMAADLLKFCTEQAKNDPFLVGIPAATNSFKEKKPYAIL) form the G protein gamma domain.

Belongs to the G protein gamma family. In terms of assembly, g proteins are composed of 3 units; alpha, beta and gamma.

It localises to the cell membrane. Its function is as follows. Guanine nucleotide-binding proteins (G proteins) are involved as a modulator or transducer in various transmembrane signaling systems. The beta and gamma chains are required for the GTPase activity, for replacement of GDP by GTP, and for G protein-effector interaction. The sequence is that of Guanine nucleotide-binding protein G(I)/G(S)/G(O) subunit gamma-14 from Homo sapiens (Human).